A 3841-amino-acid polypeptide reads, in one-letter code: Transformation/transcription domain-associated protein (3841 aa).

Disordered stretches follow at residues 491–516 (TPTV…PPAT) and 2002–2027 (QQPE…MKRG). Residues 498–515 (ALPPPAPPTPVTPAPPPA) show a composition bias toward pro residues. A Bipartite nuclear localization signal motif is present at residues 2025-2040 (KRGMSVDSAQDVKRFR). The region spanning 2671 to 3239 (VLKYLGKTHN…YFPIRTLYLT (569 aa)) is the FAT domain. The interval 3249–3271 (KSDSGQQQPSSAAAQTHSASDPG) is disordered. Residues 3251 to 3268 (DSGQQQPSSAAAQTHSAS) are compositionally biased toward low complexity. The 324-residue stretch at 3482-3805 (MPRVEIVQKH…AVTAIMTRLH (324 aa)) folds into the PI3K/PI4K catalytic domain. The interval 3488–3494 (VQKHNTA) is G-loop. The interval 3669–3677 (HLNRLNPEM) is catalytic loop. The activation loop stretch occupies residues 3689-3714 (VSYFRFDINDATGDLDANRPVPFRLT). An FATC domain is found at 3809-3841 (QFEGGESKVNTLVAAANSLDNLCRMDPAWHPWL).

Belongs to the PI3/PI4-kinase family. TRA1 subfamily.

The protein resides in the nucleus. Functionally, adapter protein, which is found in various multiprotein chromatin complexes with histone acetyltransferase activity (HAT), which gives a specific tag for epigenetic transcription activation. May be required for the mitotic checkpoint and normal cell cycle progression. May play a role in the formation and maintenance of the auditory system. This Danio rerio (Zebrafish) protein is Transformation/transcription domain-associated protein.